Consider the following 214-residue polypeptide: MKFFIDTADVKEIREAHELGVVDGVTTNPSLIAKSGRKFADVIKEITSIVDGPISAEVVALDHDGMIKEAEELVKIHPNIVIKLPMTTEGLKATKTLHGEGIKTNVTLIFSPMQALLAAKAGASYVSPFVGRLDDISQDGMGIVEEIRTIFDNYGYTTEIIVASVRNPVHVLNSALIGADVATIPYSVIMQLAKHPLTDAGIKKFLEDWEKVPK.

Residue lysine 83 is the Schiff-base intermediate with substrate of the active site.

This sequence belongs to the transaldolase family. Type 3B subfamily.

The protein localises to the cytoplasm. It catalyses the reaction D-sedoheptulose 7-phosphate + D-glyceraldehyde 3-phosphate = D-erythrose 4-phosphate + beta-D-fructose 6-phosphate. It functions in the pathway carbohydrate degradation; pentose phosphate pathway; D-glyceraldehyde 3-phosphate and beta-D-fructose 6-phosphate from D-ribose 5-phosphate and D-xylulose 5-phosphate (non-oxidative stage): step 2/3. Functionally, transaldolase is important for the balance of metabolites in the pentose-phosphate pathway. This is Probable transaldolase from Geotalea uraniireducens (strain Rf4) (Geobacter uraniireducens).